A 268-amino-acid chain; its full sequence is Pantothenate synthetase (268 aa).

Residue 18-25 (MGYLHEGH) coordinates ATP. H25 acts as the Proton donor in catalysis. Residue Q49 coordinates (R)-pantoate. Q49 is a beta-alanine binding site. Residue 135-138 (GQKD) coordinates ATP. Q141 provides a ligand contact to (R)-pantoate. ATP-binding positions include I164 and 172–175 (LSSR).

The protein belongs to the pantothenate synthetase family. Homodimer.

It is found in the cytoplasm. It catalyses the reaction (R)-pantoate + beta-alanine + ATP = (R)-pantothenate + AMP + diphosphate + H(+). It functions in the pathway cofactor biosynthesis; (R)-pantothenate biosynthesis; (R)-pantothenate from (R)-pantoate and beta-alanine: step 1/1. In terms of biological role, catalyzes the condensation of pantoate with beta-alanine in an ATP-dependent reaction via a pantoyl-adenylate intermediate. The polypeptide is Pantothenate synthetase (Dehalococcoides mccartyi (strain CBDB1)).